A 32-amino-acid polypeptide reads, in one-letter code: Peptide II.10.10 (32 aa).

3 disulfides stabilise this stretch: Cys5–Cys24, Cys10–Cys29, and Cys14–Cys31.

It belongs to the short scorpion toxin superfamily. Potassium channel inhibitor family. Alpha-KTx 10 subfamily. Expressed by the venom gland.

The protein resides in the secreted. This is Peptide II.10.10 from Centruroides tecomanus (Scorpion).